A 166-amino-acid polypeptide reads, in one-letter code: Regulatory protein RecX (166 aa).

It belongs to the RecX family.

It localises to the cytoplasm. In terms of biological role, modulates RecA activity. This chain is Regulatory protein RecX, found in Klebsiella pneumoniae subsp. pneumoniae (strain ATCC 700721 / MGH 78578).